The sequence spans 348 residues: Phospho-N-acetylmuramoyl-pentapeptide-transferase (348 aa).

10 helical membrane passes run 11 to 31 (SWML…IFLG), 68 to 88 (AGGI…LPLG), 92 to 112 (TWLF…DDII), 128 to 148 (FVIQ…IYKG), 165 to 185 (VGHS…TIVG), 196 to 216 (LDGL…VVAL), 222 to 242 (PLAQ…FAFL), 251 to 271 (VFMG…CAVM), 276 to 296 (LLLI…ILQV), and 326 to 346 (VVAR…IAAL).

Belongs to the glycosyltransferase 4 family. MraY subfamily. Requires Mg(2+) as cofactor.

It localises to the cell inner membrane. It carries out the reaction UDP-N-acetyl-alpha-D-muramoyl-L-alanyl-gamma-D-glutamyl-meso-2,6-diaminopimeloyl-D-alanyl-D-alanine + di-trans,octa-cis-undecaprenyl phosphate = di-trans,octa-cis-undecaprenyl diphospho-N-acetyl-alpha-D-muramoyl-L-alanyl-D-glutamyl-meso-2,6-diaminopimeloyl-D-alanyl-D-alanine + UMP. Its pathway is cell wall biogenesis; peptidoglycan biosynthesis. Catalyzes the initial step of the lipid cycle reactions in the biosynthesis of the cell wall peptidoglycan: transfers peptidoglycan precursor phospho-MurNAc-pentapeptide from UDP-MurNAc-pentapeptide onto the lipid carrier undecaprenyl phosphate, yielding undecaprenyl-pyrophosphoryl-MurNAc-pentapeptide, known as lipid I. This chain is Phospho-N-acetylmuramoyl-pentapeptide-transferase, found in Chlamydia caviae (strain ATCC VR-813 / DSM 19441 / 03DC25 / GPIC) (Chlamydophila caviae).